Reading from the N-terminus, the 283-residue chain is Small ribosomal subunit protein uS3 (283 aa).

A KH type-2 domain is found at 39-107 (VRAYLKTKLK…PVHVNIEEIR (69 aa)). Residues 209-283 (PSGEPPVDLT…GAVPAEKAGE (75 aa)) form a disordered region. Positions 217–235 (LTKEDDTKRRGPRRDDGKP) are enriched in basic and acidic residues. The segment covering 244–260 (PEGQPGAAAAPGAAPAA) has biased composition (low complexity).

The protein belongs to the universal ribosomal protein uS3 family. Part of the 30S ribosomal subunit. Forms a tight complex with proteins S10 and S14.

Binds the lower part of the 30S subunit head. Binds mRNA in the 70S ribosome, positioning it for translation. The protein is Small ribosomal subunit protein uS3 of Herminiimonas arsenicoxydans.